We begin with the raw amino-acid sequence, 205 residues long: Dephospho-CoA kinase (205 aa).

A DPCK domain is found at 6–205; the sequence is RIGLTGGIAA…EIYAGWCAGR (200 aa). ATP is bound at residue 14 to 19; it reads AAGKST.

It belongs to the CoaE family.

It localises to the cytoplasm. It catalyses the reaction 3'-dephospho-CoA + ATP = ADP + CoA + H(+). The protein operates within cofactor biosynthesis; coenzyme A biosynthesis; CoA from (R)-pantothenate: step 5/5. Its function is as follows. Catalyzes the phosphorylation of the 3'-hydroxyl group of dephosphocoenzyme A to form coenzyme A. The sequence is that of Dephospho-CoA kinase from Bifidobacterium longum (strain NCC 2705).